A 282-amino-acid polypeptide reads, in one-letter code: Type 1 encapsulin shell protein (282 aa).

This sequence belongs to the encapsulin family. Family 1 subfamily. In terms of assembly, initially thought to form a 180 subunit shell. Forms hollow shells composed of 240 subunits, making a shell about 42-43 nm in diameter. The monomer is capable of assuming 4 different conformations which allows packaging into the icosahedron. The shell has 12 pentameric and 30 hexameric capsomers which form the vertices and faces of the icosahedral nanocompartment.

It localises to the encapsulin nanocompartment. Shell component of a type 1 encapsulin nanocompartment. Assembles into proteinaceous icosahedral shells 42-43 nm in diameter with an iron- and phosphorus-rich core (1Fe:1.1P) which can store over 23,000-35,000 iron atoms (with a calculated maximum of 83,000 Fe). There are 2 types of negatively charged open pores in the cryo-electron structure; a 3-fold pore where 3 hexamers meet with a minimal size of 7.2 Angstroms and a 5-fold pore where pentamers meet with a minimal size of 2.3 Angstroms. The 2-fold pore seen in other encapsulin nanocompartments is closed. Empty compartments can be generated in E.coli. Both types of pore have extra density in their centers in the structure. 2 different cargo proteins have been identified (IMEF and Fer); when both are expressed in E.coli with the shell protein only IMEF is detected within the nanocompartment. E.coli expressing all 3 genes stores the largest amount of iron and is protected from Fe/H2O2-induced oxidative stress. Part of the iron-mineralizing encapsulin-associated Firmicute (IMEF) system. This is Type 1 encapsulin shell protein from Bacillus thermotolerans (Quasibacillus thermotolerans).